A 199-amino-acid chain; its full sequence is Peptidyl-tRNA hydrolase (199 aa).

Residue Tyr-15 coordinates tRNA. His-20 acts as the Proton acceptor in catalysis. TRNA is bound by residues Tyr-66, Asn-68, and Asn-114.

It belongs to the PTH family. As to quaternary structure, monomer.

The protein localises to the cytoplasm. The catalysed reaction is an N-acyl-L-alpha-aminoacyl-tRNA + H2O = an N-acyl-L-amino acid + a tRNA + H(+). Hydrolyzes ribosome-free peptidyl-tRNAs (with 1 or more amino acids incorporated), which drop off the ribosome during protein synthesis, or as a result of ribosome stalling. Its function is as follows. Catalyzes the release of premature peptidyl moieties from peptidyl-tRNA molecules trapped in stalled 50S ribosomal subunits, and thus maintains levels of free tRNAs and 50S ribosomes. The protein is Peptidyl-tRNA hydrolase of Burkholderia ambifaria (strain MC40-6).